The primary structure comprises 346 residues: Elongation factor 1-alpha (346 aa).

A tr-type G domain is found at 1–127 (GTSQADVALL…DNVEPPKRPS (127 aa)). GTP is bound at residue 49–52 (NKMD).

It belongs to the TRAFAC class translation factor GTPase superfamily. Classic translation factor GTPase family. EF-Tu/EF-1A subfamily.

It localises to the cytoplasm. Its function is as follows. This protein promotes the GTP-dependent binding of aminoacyl-tRNA to the A-site of ribosomes during protein biosynthesis. The polypeptide is Elongation factor 1-alpha (Eimeria bovis).